A 653-amino-acid chain; its full sequence is Protein CBFA2T3 (653 aa).

Basic and acidic residues predominate over residues 1–10; that stretch reads MPASRLRDRA. The segment at 1-109 is disordered; it reads MPASRLRDRA…HTHREDGPAT (109 aa). Residues 1–127 form a required for nucleolar targeting (in isoform 1) region; it reads MPASRLRDRA…CLKWSMVCLL (127 aa). Residues 1-430 form a mediates interaction with PDE7A (in isoform 2) region; sequence MPASRLRDRA…RRCQEADREE (430 aa). Residues 1 to 435 are mediates localization to the nucleus; that stretch reads MPASRLRDRA…ADREELNHWA (435 aa). Low complexity predominate over residues 11–23; the sequence is ASSASGSTCGSMS. Residues 75–86 show a composition bias toward pro residues; it reads STPPSMPPPPPA. The tract at residues 145–242 is interaction with ZBTB33; the sequence is PNGFSNGPAT…IPFLKANLPL (98 aa). In terms of domain architecture, TAFH spans 171 to 266; that stretch reads ARQLSKLKRF…TPAQYLAQHE (96 aa). The interaction with HIF1A stretch occupies residues 176–268; sequence KLKRFLTTLQ…AQYLAQHEQL (93 aa). The segment at 284-342 is disordered; that stretch reads LLEVNENGKRRTPDRTKENGSDRDPLHPEHLSKRPCTLNPAQRYSPSNGPPQPTPPPHY. The segment covering 289–315 has biased composition (basic and acidic residues); sequence ENGKRRTPDRTKENGSDRDPLHPEHLS. Pro residues predominate over residues 331–341; sequence NGPPQPTPPPH. The interval 394 to 412 is nervy homology region 2 (NHR2); essential for down-regulation of PFKFB3, PFKFB4 and PDK1 expression; sequence EEWKHLNNLLNCIMDMVEK. The segment covering 434-446 has biased composition (basic and acidic residues); the sequence is WARRYSDAEDTKK. A disordered region spans residues 434-472; the sequence is WARRYSDAEDTKKGPAPAAARPRSSSAGPEGPQLDVPRE. Residues 447–462 show a composition bias toward low complexity; the sequence is GPAPAAARPRSSSAGP. Phosphoserine occurs at positions 457 and 459. Residue threonine 479 is modified to Phosphothreonine. Residues 485 to 506 form a mediates interaction with PRKAR2A region; it reads DIWRKAEEAVNEVKRQAMSELQ. A nervy homology region 3 (NHR3); essential for down-regulation of PFKFB3, PFKFB4 and PDK1 expression region spans residues 485–533; sequence DIWRKAEEAVNEVKRQAMSELQKAVSDAERKAHELITTERAKMERALAE. The stretch at 488–543 forms a coiled coil; it reads RKAEEAVNEVKRQAMSELQKAVSDAERKAHELITTERAKMERALAEAKRQASEDAL. Residues cysteine 556, cysteine 559, cysteine 567, cysteine 570, cysteine 576, cysteine 580, histidine 588, and cysteine 592 each contribute to the Zn(2+) site. The MYND-type zinc finger occupies 556-592; sequence CWNCGRKASETCSGCNAARYCGSFCQHRDWEKHHHVC. Residues 603 to 653 form a disordered region; that stretch reads VADPVPGPPEAAHSLGPSLPVGAASPSEAGSAGPSRPGSPSPPGPLDTVPR. Residues 622–638 show a composition bias toward low complexity; that stretch reads PVGAASPSEAGSAGPSR. Residues serine 637 and serine 641 each carry the phosphoserine modification. Threonine 650 carries the post-translational modification Phosphothreonine.

Belongs to the CBFA2T family. Homooligomer. Homotetramerization is mediated by nervy homology region 2 (NRH2). Can interact with RUNX1T1 and CBFA2T2; heterotetramerization between members of the CBFA2T family is proposed. Component of a TAL-1 complex composed at least of CBFA2T3, LDB1, TAL1 and TCF3. Interacts with ERBB4, HDAC1, HDAC2, HDAC3, HDAC6, HDAC8, NCOR1, NCOR2, and ZNF652. According to PubMed:12242670, may not interact with HDAC6. Interacts with PLXNA1, PLXNA3 and PRKAR1A. Isoform 2 interacts with PRKAR2A, PDE7A and probably PDE4A. Interacts with ZBTB4, ZBTB38 and ZBTB33. Interacts with HIF1A and EGLN1. Interacts with the AML1-MTG8/ETO fusion protein. Widely expressed with higher expression in heart, pancreas, skeletal muscle, spleen, thymus and peripheral blood leukocytes. Expressed in hematopoietic cells (at protein level).

The protein resides in the nucleus. Its subcellular location is the nucleolus. It localises to the nucleoplasm. It is found in the golgi apparatus membrane. Transcriptional corepressor which facilitates transcriptional repression via its association with DNA-binding transcription factors and recruitment of other corepressors and histone-modifying enzymes. Can repress the expression of MMP7 in a ZBTB33-dependent manner. Reduces the protein levels and stability of the transcriptinal regulator HIF1A; interacts with EGLN1 and promotes the HIF1A prolyl hydroxylation-dependent ubiquitination and proteasomal degradation pathway. Contributes to inhibition of glycolysis and stimulation of mitochondrial respiration by down-regulating the expression of glycolytic genes including PFKFB3, PFKFB4, PDK1, PFKP, LDHA and HK1 which are direct targets of HIF1A. Regulates the proliferation and the differentiation of erythroid progenitors by repressing the expression of TAL1 target genes. Plays a role in granulocyte differentiation. Its function is as follows. Isoform 2 functions as an A-kinase-anchoring protein. The protein is Protein CBFA2T3 (CBFA2T3) of Homo sapiens (Human).